Consider the following 146-residue polypeptide: Large ribosomal subunit protein uL15 (146 aa).

The segment covering 1-13 (MKLHELKPSEGSR) has biased composition (basic and acidic residues). Residues 1–57 (MKLHELKPSEGSRKTRNRVGRGIGSGNGKTAGKGHKGQNARSGGGVRPGFEGGQMPL) are disordered. 2 stretches are compositionally biased toward gly residues: residues 21 to 31 (RGIGSGNGKTA) and 42 to 52 (SGGGVRPGFEG).

The protein belongs to the universal ribosomal protein uL15 family. In terms of assembly, part of the 50S ribosomal subunit.

Functionally, binds to the 23S rRNA. This is Large ribosomal subunit protein uL15 from Bacillus subtilis (strain 168).